Reading from the N-terminus, the 156-residue chain is Small ribosomal subunit protein uS7 (156 aa).

This sequence belongs to the universal ribosomal protein uS7 family. As to quaternary structure, part of the 30S ribosomal subunit. Contacts proteins S9 and S11.

Functionally, one of the primary rRNA binding proteins, it binds directly to 16S rRNA where it nucleates assembly of the head domain of the 30S subunit. Is located at the subunit interface close to the decoding center, probably blocks exit of the E-site tRNA. This chain is Small ribosomal subunit protein uS7, found in Mycobacteroides abscessus (strain ATCC 19977 / DSM 44196 / CCUG 20993 / CIP 104536 / JCM 13569 / NCTC 13031 / TMC 1543 / L948) (Mycobacterium abscessus).